Reading from the N-terminus, the 390-residue chain is uncharacterized protein (390 aa).

Belongs to the glycosyltransferase group 1 family. Glycosyltransferase 4 subfamily.

This is an uncharacterized protein from Methanocaldococcus jannaschii (strain ATCC 43067 / DSM 2661 / JAL-1 / JCM 10045 / NBRC 100440) (Methanococcus jannaschii).